A 317-amino-acid chain; its full sequence is Transaldolase (317 aa).

Lys-126 serves as the catalytic Schiff-base intermediate with substrate.

The protein belongs to the transaldolase family. Type 1 subfamily. Homodimer.

The protein resides in the cytoplasm. The catalysed reaction is D-sedoheptulose 7-phosphate + D-glyceraldehyde 3-phosphate = D-erythrose 4-phosphate + beta-D-fructose 6-phosphate. Its pathway is carbohydrate degradation; pentose phosphate pathway; D-glyceraldehyde 3-phosphate and beta-D-fructose 6-phosphate from D-ribose 5-phosphate and D-xylulose 5-phosphate (non-oxidative stage): step 2/3. In terms of biological role, transaldolase is important for the balance of metabolites in the pentose-phosphate pathway. The sequence is that of Transaldolase from Burkholderia lata (strain ATCC 17760 / DSM 23089 / LMG 22485 / NCIMB 9086 / R18194 / 383).